We begin with the raw amino-acid sequence, 325 residues long: Solute-binding protein RD1_1052 (325 aa).

The N-terminal stretch at 1-26 is a signal peptide; the sequence is MRLFTKIKGLAAVTCVAALASSAAFA. D-mannonate-binding positions include glutamate 75, 93–95, 148–151, arginine 171, and asparagine 211; these read GES and RGPR. L-galactonate is bound by residues glutamate 75, 93 to 95, 148 to 151, arginine 171, and asparagine 211; these read GES and RGPR.

The protein belongs to the bacterial solute-binding protein 7 family. In terms of assembly, the complex is comprised of an extracytoplasmic solute-binding protein and a heteromeric permease formed by two transmembrane proteins.

It is found in the periplasm. Solute-binding protein that binds L-galactonate and D-mannonate (in vitro). Probably part of a tripartite ATP-independent periplasmic (TRAP) transport system that mediates solute transport into the cytoplasm. This Roseobacter denitrificans (strain ATCC 33942 / OCh 114) (Erythrobacter sp. (strain OCh 114)) protein is Solute-binding protein RD1_1052.